A 355-amino-acid chain; its full sequence is Histidinol-phosphate aminotransferase (355 aa).

Residue lysine 214 is modified to N6-(pyridoxal phosphate)lysine.

This sequence belongs to the class-II pyridoxal-phosphate-dependent aminotransferase family. Histidinol-phosphate aminotransferase subfamily. In terms of assembly, homodimer. It depends on pyridoxal 5'-phosphate as a cofactor.

The catalysed reaction is L-histidinol phosphate + 2-oxoglutarate = 3-(imidazol-4-yl)-2-oxopropyl phosphate + L-glutamate. Its pathway is amino-acid biosynthesis; L-histidine biosynthesis; L-histidine from 5-phospho-alpha-D-ribose 1-diphosphate: step 7/9. In Buchnera aphidicola subsp. Schizaphis graminum (strain Sg), this protein is Histidinol-phosphate aminotransferase (hisC).